Here is a 146-residue protein sequence, read N- to C-terminus: Protein archease (146 aa).

Positions 16, 145, and 146 each coordinate Ca(2+).

This sequence belongs to the archease family.

Its function is as follows. Activates the tRNA-splicing ligase complex by facilitating the enzymatic turnover of catalytic subunit RtcB. Acts by promoting the guanylylation of RtcB, a key intermediate step in tRNA ligation. Can also alter the NTP specificity of RtcB such that ATP, dGTP or ITP is used efficiently. The polypeptide is Protein archease (Methanosarcina barkeri (strain Fusaro / DSM 804)).